The chain runs to 270 residues: Formamidopyrimidine-DNA glycosylase (270 aa).

The Schiff-base intermediate with DNA role is filled by P2. Residue E3 is the Proton donor of the active site. Residue K58 is the Proton donor; for beta-elimination activity of the active site. H91, R110, and R151 together coordinate DNA. Residues 236-270 (FVYGRGGMPCKLCGTTLREAKLGQRASVYCPRCQR) form an FPG-type zinc finger. R260 (proton donor; for delta-elimination activity) is an active-site residue.

It belongs to the FPG family. In terms of assembly, monomer. Zn(2+) serves as cofactor.

The enzyme catalyses Hydrolysis of DNA containing ring-opened 7-methylguanine residues, releasing 2,6-diamino-4-hydroxy-5-(N-methyl)formamidopyrimidine.. It catalyses the reaction 2'-deoxyribonucleotide-(2'-deoxyribose 5'-phosphate)-2'-deoxyribonucleotide-DNA = a 3'-end 2'-deoxyribonucleotide-(2,3-dehydro-2,3-deoxyribose 5'-phosphate)-DNA + a 5'-end 5'-phospho-2'-deoxyribonucleoside-DNA + H(+). Its function is as follows. Involved in base excision repair of DNA damaged by oxidation or by mutagenic agents. Acts as a DNA glycosylase that recognizes and removes damaged bases. Has a preference for oxidized purines, such as 7,8-dihydro-8-oxoguanine (8-oxoG). Has AP (apurinic/apyrimidinic) lyase activity and introduces nicks in the DNA strand. Cleaves the DNA backbone by beta-delta elimination to generate a single-strand break at the site of the removed base with both 3'- and 5'-phosphates. The chain is Formamidopyrimidine-DNA glycosylase from Pseudomonas putida (strain W619).